The sequence spans 492 residues: Ribose import ATP-binding protein RbsA (492 aa).

ABC transporter domains lie at 3 to 239 and 238 to 492; these read IDMR…VGRK and RKLE…TGGK. ATP is bound at residue 35–42; the sequence is GENGAGKS.

This sequence belongs to the ABC transporter superfamily. Ribose importer (TC 3.A.1.2.1) family. The complex is composed of an ATP-binding protein (RbsA), two transmembrane proteins (RbsC) and a solute-binding protein (RbsB).

It is found in the cell membrane. It carries out the reaction D-ribose(out) + ATP + H2O = D-ribose(in) + ADP + phosphate + H(+). In terms of biological role, part of the ABC transporter complex RbsABC involved in ribose import. Responsible for energy coupling to the transport system. The sequence is that of Ribose import ATP-binding protein RbsA from Streptococcus agalactiae serotype V (strain ATCC BAA-611 / 2603 V/R).